Reading from the N-terminus, the 131-residue chain is UPF0102 protein CYA_0708 (131 aa).

The protein belongs to the UPF0102 family.

This Synechococcus sp. (strain JA-3-3Ab) (Cyanobacteria bacterium Yellowstone A-Prime) protein is UPF0102 protein CYA_0708.